The primary structure comprises 204 residues: Protease (204 aa).

Active-site residues include His54, Asp71, and Cys122.

This sequence belongs to the peptidase C5 family. Interacts with protease cofactor pVI-C; this interaction is necessary for protease activation.

It localises to the virion. The protein resides in the host nucleus. It carries out the reaction Cleaves proteins of the adenovirus and its host cell at two consensus sites: -Yaa-Xaa-Gly-Gly-|-Xaa- and -Yaa-Xaa-Gly-Xaa-|-Gly- (in which Yaa is Met, Ile or Leu, and Xaa is any amino acid).. With respect to regulation, requires DNA and protease cofactor for maximal activation. Inside nascent virions, becomes partially activated by binding to the viral DNA, allowing it to cleave the cofactor that binds to the protease and fully activates it. Actin, like the viral protease cofactor, seems to act as a cofactor in the cleavage of cytokeratin 18 and of actin itself. Functionally, cleaves viral precursor proteins (pTP, pIIIa, pVI, pVII, pVIII, and pX) inside newly assembled particles giving rise to mature virions. Protease complexed to its cofactor slides along the viral DNA to specifically locate and cleave the viral precursors. Mature virions have a weakened organization compared to the unmature virions, thereby facilitating subsequent uncoating. Without maturation, the particle lacks infectivity and is unable to uncoat. Late in adenovirus infection, in the cytoplasm, may participate in the cytoskeleton destruction. Cleaves host cell cytoskeletal keratins K7 and K18. This chain is Protease, found in Bos taurus (Bovine).